A 287-amino-acid polypeptide reads, in one-letter code: Proteasome subunit alpha (287 aa).

The disordered stretch occupies residues 241–287; that stretch reads GVVAGEEPHTAAHAPSVPQPGAPAGLGDPGAPDTGGTAGSGGEAPTT. Positions 262-275 are enriched in low complexity; sequence APAGLGDPGAPDTG. The segment covering 276–287 has biased composition (gly residues); sequence GTAGSGGEAPTT.

It belongs to the peptidase T1A family. As to quaternary structure, the 20S proteasome core is composed of 14 alpha and 14 beta subunits that assemble into four stacked heptameric rings, resulting in a barrel-shaped structure. The two inner rings, each composed of seven catalytic beta subunits, are sandwiched by two outer rings, each composed of seven alpha subunits. The catalytic chamber with the active sites is on the inside of the barrel. Has a gated structure, the ends of the cylinder being occluded by the N-termini of the alpha-subunits. Is capped by the proteasome-associated ATPase, ARC.

The protein resides in the cytoplasm. Its pathway is protein degradation; proteasomal Pup-dependent pathway. The formation of the proteasomal ATPase ARC-20S proteasome complex, likely via the docking of the C-termini of ARC into the intersubunit pockets in the alpha-rings, may trigger opening of the gate for substrate entry. Interconversion between the open-gate and close-gate conformations leads to a dynamic regulation of the 20S proteasome proteolysis activity. Its function is as follows. Component of the proteasome core, a large protease complex with broad specificity involved in protein degradation. In Geodermatophilus obscurus (strain ATCC 25078 / DSM 43160 / JCM 3152 / CCUG 61914 / KCC A-0152 / KCTC 9177 / NBRC 13315 / NRRL B-3577 / G-20), this protein is Proteasome subunit alpha.